We begin with the raw amino-acid sequence, 243 residues long: Proteasome subunit beta (243 aa).

Positions 1–49 (MRTPTGDLSDGPAEELGRDQPVFGPEIGEFEHSERRAAQADGEGEMKTG) are cleaved as a propeptide — removed in mature form; by autocatalysis. The disordered stretch occupies residues 1 to 50 (MRTPTGDLSDGPAEELGRDQPVFGPEIGEFEHSERRAAQADGEGEMKTGT). Over residues 29 to 38 (EFEHSERRAA) the composition is skewed to basic and acidic residues. Residue Thr-50 is the Nucleophile of the active site.

It belongs to the peptidase T1B family. As to quaternary structure, the 20S proteasome core is composed of 14 alpha and 14 beta subunits that assemble into four stacked heptameric rings, resulting in a barrel-shaped structure. The two inner rings, each composed of seven catalytic beta subunits, are sandwiched by two outer rings, each composed of seven alpha subunits. The catalytic chamber with the active sites is on the inside of the barrel. Has a gated structure, the ends of the cylinder being occluded by the N-termini of the alpha-subunits. Is capped at one or both ends by the proteasome regulatory ATPase, PAN.

The protein localises to the cytoplasm. It carries out the reaction Cleavage of peptide bonds with very broad specificity.. The formation of the proteasomal ATPase PAN-20S proteasome complex, via the docking of the C-termini of PAN into the intersubunit pockets in the alpha-rings, triggers opening of the gate for substrate entry. Interconversion between the open-gate and close-gate conformations leads to a dynamic regulation of the 20S proteasome proteolysis activity. Component of the proteasome core, a large protease complex with broad specificity involved in protein degradation. The sequence is that of Proteasome subunit beta from Halorubrum lacusprofundi (strain ATCC 49239 / DSM 5036 / JCM 8891 / ACAM 34).